Consider the following 378-residue polypeptide: MASPRLENFRRIVVKVGSSLLVDSEAGEVRASWLAALAADIARLHGRGCELLVVSSGSIALGRSRLKLPRGPLKLEESQAAAAVGQIALARIWSEVLGDHGIGAGQILVTLQDTEERRRYLNARSTIAKLLDWRAVPVINENDTVATAEIRYGDNDRLAARVATMASADLLVLLSDIDGLYTAPPAQDPNARLIPVVESITADIEAMAGSAASEFSRGGMRTKIEAAKIATTGGTHMLIASGKIEHPLAAIANGGRCTWFLTPANPVTARKRWIAGSLEPKGTLTIDAGAVTALRAGKSLLPAGVIRVDGQFARGDAVVVRGPDTHEIGRGLVAYDADDAERIKGRSSPDVAVILGISGRAEMIHRDDLVIGPAGAMG.

K15 is an ATP binding site. Positions 56, 143, and 155 each coordinate substrate. ATP is bound at residue 175 to 176 (SD). Residues 281–358 (KGTLTIDAGA…PDVAVILGIS (78 aa)) form the PUA domain.

Belongs to the glutamate 5-kinase family.

The protein localises to the cytoplasm. It carries out the reaction L-glutamate + ATP = L-glutamyl 5-phosphate + ADP. It functions in the pathway amino-acid biosynthesis; L-proline biosynthesis; L-glutamate 5-semialdehyde from L-glutamate: step 1/2. In terms of biological role, catalyzes the transfer of a phosphate group to glutamate to form L-glutamate 5-phosphate. In Bradyrhizobium sp. (strain BTAi1 / ATCC BAA-1182), this protein is Glutamate 5-kinase.